The following is a 364-amino-acid chain: DNA polymerase IV (364 aa).

A UmuC domain is found at 14-198; sequence IIHIDMDAFF…LPIEKFHGVG (185 aa). 2 residues coordinate Mg(2+): Asp18 and Asp116. Glu117 is an active-site residue.

Belongs to the DNA polymerase type-Y family. Monomer. The cofactor is Mg(2+).

It localises to the cytoplasm. The catalysed reaction is DNA(n) + a 2'-deoxyribonucleoside 5'-triphosphate = DNA(n+1) + diphosphate. In terms of biological role, poorly processive, error-prone DNA polymerase involved in untargeted mutagenesis. Copies undamaged DNA at stalled replication forks, which arise in vivo from mismatched or misaligned primer ends. These misaligned primers can be extended by PolIV. Exhibits no 3'-5' exonuclease (proofreading) activity. May be involved in translesional synthesis, in conjunction with the beta clamp from PolIII. The sequence is that of DNA polymerase IV from Streptococcus pyogenes serotype M1.